Consider the following 89-residue polypeptide: Small ribosomal subunit protein bS20 (89 aa).

A disordered region spans residues 1–25 (MANTPQSKKRARQLERRTAVNKARR).

It belongs to the bacterial ribosomal protein bS20 family.

Its function is as follows. Binds directly to 16S ribosomal RNA. The chain is Small ribosomal subunit protein bS20 from Paracoccus denitrificans (strain Pd 1222).